A 300-amino-acid chain; its full sequence is Haloalkane dehalogenase (300 aa).

Residues 32-155 enclose the AB hydrolase-1 domain; it reads AIVFQHGNPT…PAVRGVFQGF (124 aa). The active-site Nucleophile is Asp-109. Glu-133 (proton donor) is an active-site residue. Catalysis depends on His-273, which acts as the Proton acceptor.

The protein belongs to the haloalkane dehalogenase family. Type 2 subfamily. Monomer.

It catalyses the reaction 1-haloalkane + H2O = a halide anion + a primary alcohol + H(+). Functionally, catalyzes hydrolytic cleavage of carbon-halogen bonds in halogenated aliphatic compounds, leading to the formation of the corresponding primary alcohols, halide ions and protons. The sequence is that of Haloalkane dehalogenase from Mycobacterium tuberculosis (strain ATCC 25177 / H37Ra).